A 452-amino-acid polypeptide reads, in one-letter code: D-inositol 3-phosphate glycosyltransferase (452 aa).

A 1D-myo-inositol 3-phosphate-binding site is contributed by His-25. UDP-N-acetyl-alpha-D-glucosamine is bound by residues 31-32 (QP) and Gly-39. 1D-myo-inositol 3-phosphate is bound by residues 36-41 (DAGGMN), Lys-94, Tyr-127, Thr-151, and Arg-171. The UDP-N-acetyl-alpha-D-glucosamine site is built by Arg-245, Lys-250, and Gln-309. The Mg(2+) site is built by Tyr-318, Arg-319, and Ser-321. 2 residues coordinate UDP-N-acetyl-alpha-D-glucosamine: Glu-331 and Glu-339. Thr-345 contributes to the Mg(2+) binding site.

The protein belongs to the glycosyltransferase group 1 family. MshA subfamily. In terms of assembly, homodimer.

It catalyses the reaction 1D-myo-inositol 3-phosphate + UDP-N-acetyl-alpha-D-glucosamine = 1D-myo-inositol 2-acetamido-2-deoxy-alpha-D-glucopyranoside 3-phosphate + UDP + H(+). In terms of biological role, catalyzes the transfer of a N-acetyl-glucosamine moiety to 1D-myo-inositol 3-phosphate to produce 1D-myo-inositol 2-acetamido-2-deoxy-glucopyranoside 3-phosphate in the mycothiol biosynthesis pathway. The sequence is that of D-inositol 3-phosphate glycosyltransferase from Rhodococcus jostii (strain RHA1).